We begin with the raw amino-acid sequence, 500 residues long: Cytochrome P450 6B4 (500 aa).

Residue Cys443 coordinates heme.

Belongs to the cytochrome P450 family. Heme serves as cofactor.

It is found in the endoplasmic reticulum membrane. The protein resides in the microsome membrane. It catalyses the reaction an organic molecule + reduced [NADPH--hemoprotein reductase] + O2 = an alcohol + oxidized [NADPH--hemoprotein reductase] + H2O + H(+). Its function is as follows. Enables the insect to feed on furanocoumarin-producing plants and evolved as an adaptation for detoxification of xanthotoxin and other furanocoumarins. This isozyme metabolizes isopimpinellin, imperatorin, and bergapten at high rates, xanthotoxin and psoralen at intermediate rates and angelicin, sphondin, and trioxsalen only at very low rates. This is Cytochrome P450 6B4 (CYP6B4) from Papilio glaucus (Eastern tiger swallowtail butterfly).